Here is a 404-residue protein sequence, read N- to C-terminus: Putative replication protein C (404 aa).

A disordered region spans residues 249–287 (PDQIERHKQNSHPESTNEFEPSSREEQGERPSPAIEPQR).

To A.rhizogenes possible replication protein C (RepC).

In Sinorhizobium fredii (strain NBRC 101917 / NGR234), this protein is Putative replication protein C.